The following is a 223-amino-acid chain: Deoxyribose-phosphate aldolase (223 aa).

D89 serves as the catalytic Proton donor/acceptor. The Schiff-base intermediate with acetaldehyde role is filled by K152. K181 acts as the Proton donor/acceptor in catalysis.

It belongs to the DeoC/FbaB aldolase family. DeoC type 1 subfamily.

The protein localises to the cytoplasm. It catalyses the reaction 2-deoxy-D-ribose 5-phosphate = D-glyceraldehyde 3-phosphate + acetaldehyde. The protein operates within carbohydrate degradation; 2-deoxy-D-ribose 1-phosphate degradation; D-glyceraldehyde 3-phosphate and acetaldehyde from 2-deoxy-alpha-D-ribose 1-phosphate: step 2/2. Catalyzes a reversible aldol reaction between acetaldehyde and D-glyceraldehyde 3-phosphate to generate 2-deoxy-D-ribose 5-phosphate. The polypeptide is Deoxyribose-phosphate aldolase (Bacillus cereus (strain ATCC 14579 / DSM 31 / CCUG 7414 / JCM 2152 / NBRC 15305 / NCIMB 9373 / NCTC 2599 / NRRL B-3711)).